The sequence spans 165 residues: Endoribonuclease YbeY (165 aa).

Zn(2+) is bound by residues His130, His134, and His140.

The protein belongs to the endoribonuclease YbeY family. Zn(2+) serves as cofactor.

The protein resides in the cytoplasm. Its function is as follows. Single strand-specific metallo-endoribonuclease involved in late-stage 70S ribosome quality control and in maturation of the 3' terminus of the 16S rRNA. The protein is Endoribonuclease YbeY of Streptococcus thermophilus (strain CNRZ 1066).